Here is a 506-residue protein sequence, read N- to C-terminus: Aluminum-activated malate transporter 7 (506 aa).

The next 6 membrane-spanning stretches (helical) occupy residues 28 to 48 (VGLVLALVSSFYYYQPLYDSF), 52 to 72 (AMWAVMTVVVVFEFSVGATLG), 78 to 98 (VAATLFAGGLGIGAHHLASMS), 104 to 124 (PILLAVFVFVQAALSTFVRFF), 130 to 150 (RYDYSLLIFILTFALISVSGF), and 166 to 186 (VIIGGLSCVIISIFVCPVWAG). The segment at 461–485 (DDGNNDDTSKNDNGSKEVSIHEKHE) is disordered. Residues 467-485 (DTSKNDNGSKEVSIHEKHE) show a composition bias toward basic and acidic residues.

The protein belongs to the aromatic acid exporter (TC 2.A.85) family.

It is found in the membrane. In terms of biological role, malate transporter. The sequence is that of Aluminum-activated malate transporter 7 (ALMT7) from Arabidopsis thaliana (Mouse-ear cress).